The following is a 102-amino-acid chain: NADH-quinone oxidoreductase subunit K (102 aa).

Transmembrane regions (helical) follow at residues 5–25, 31–51, and 62–82; these read LGHY…GIFL, IVLL…FVAF, and VFVF…LAIL.

It belongs to the complex I subunit 4L family. In terms of assembly, NDH-1 is composed of 14 different subunits. Subunits NuoA, H, J, K, L, M, N constitute the membrane sector of the complex.

Its subcellular location is the cell inner membrane. The enzyme catalyses a quinone + NADH + 5 H(+)(in) = a quinol + NAD(+) + 4 H(+)(out). In terms of biological role, NDH-1 shuttles electrons from NADH, via FMN and iron-sulfur (Fe-S) centers, to quinones in the respiratory chain. The immediate electron acceptor for the enzyme in this species is believed to be ubiquinone. Couples the redox reaction to proton translocation (for every two electrons transferred, four hydrogen ions are translocated across the cytoplasmic membrane), and thus conserves the redox energy in a proton gradient. The polypeptide is NADH-quinone oxidoreductase subunit K (Methylibium petroleiphilum (strain ATCC BAA-1232 / LMG 22953 / PM1)).